The primary structure comprises 570 residues: MNSTPDLISPQKSNSSNSYELESGRSKAMNTPEGKNESFHDNLSESQVQPAVAPPNTGKGVYVTVSICCVMVAFGGFIFGWDTGTISGFVAQTDFLRRFGMKHHDGSHYLSKVRTGLIVSIFNIGCAIGGIVLAKLGDMYGRRIGLIVVVVIYTIGIIIQIASINKWYQYFIGRIISGLGVGGITVLSPMLISEVAPSEMRGTLVSCYQVMITLGIFLGYCTNFGTKNYSNSVQWRVPLGLCFAWALFMIGGMMFVPESPRYLVEAGRIDEARASLAKVNKCPPDHPYIQYELETIEASVEEMRAAGTASWGELFTGKPAMFQRTMMGIMIQSLQQLTGDNYFFYYGTIVFQAVGLSDSFETSIVFGVVNFFSTCCSLYTVDRFGRRNCLMWGAVGMVCCYVVYASVGVTRLWPNGQDQPSSKGAGNCMIVFACFYIFCFATTWAPIAYVVISECFPLRVKSKCMSIASAANWIWGFLISFFTPFITGAINFYYGYVFMGCMVFAYFYVFFFVPETKGLSLEEVNDMYAEGVLPWKSASWVPVSKRGADYNADDLMHDDQPFYKSLFSRK.

Residues 1–20 (MNSTPDLISPQKSNSSNSYE) show a composition bias toward polar residues. The segment at 1-51 (MNSTPDLISPQKSNSSNSYELESGRSKAMNTPEGKNESFHDNLSESQVQPA) is disordered. At 1-60 (MNSTPDLISPQKSNSSNSYELESGRSKAMNTPEGKNESFHDNLSESQVQPAVAPPNTGKG) the chain is on the cytoplasmic side. Phosphoserine occurs at positions 23, 38, and 44. Positions 34 to 43 (GKNESFHDNL) are enriched in basic and acidic residues. A helical transmembrane segment spans residues 61 to 81 (VYVTVSICCVMVAFGGFIFGW). Topologically, residues 82-116 (DTGTISGFVAQTDFLRRFGMKHHDGSHYLSKVRTG) are extracellular. The helical transmembrane segment at 117–137 (LIVSIFNIGCAIGGIVLAKLG) threads the bilayer. The Cytoplasmic portion of the chain corresponds to 138 to 143 (DMYGRR). The helical transmembrane segment at 144 to 164 (IGLIVVVVIYTIGIIIQIASI) threads the bilayer. At 165-174 (NKWYQYFIGR) the chain is on the extracellular side. Residues 175–195 (IISGLGVGGITVLSPMLISEV) traverse the membrane as a helical segment. Residues 196–201 (APSEMR) lie on the Cytoplasmic side of the membrane. A helical membrane pass occupies residues 202-222 (GTLVSCYQVMITLGIFLGYCT). At 223 to 236 (NFGTKNYSNSVQWR) the chain is on the extracellular side. An N-linked (GlcNAc...) asparagine glycan is attached at N228. The chain crosses the membrane as a helical span at residues 237-257 (VPLGLCFAWALFMIGGMMFVP). Residues 258 to 340 (ESPRYLVEAG…IQSLQQLTGD (83 aa)) are Cytoplasmic-facing. A helical membrane pass occupies residues 341-357 (NYFFYYGTIVFQAVGLS). Residues 358 to 363 (DSFETS) are Extracellular-facing. The helical transmembrane segment at 364–381 (IVFGVVNFFSTCCSLYTV) threads the bilayer. Topologically, residues 382–388 (DRFGRRN) are cytoplasmic. The chain crosses the membrane as a helical span at residues 389 to 409 (CLMWGAVGMVCCYVVYASVGV). The Extracellular segment spans residues 410–431 (TRLWPNGQDQPSSKGAGNCMIV). A helical membrane pass occupies residues 432–452 (FACFYIFCFATTWAPIAYVVI). Topologically, residues 453–469 (SECFPLRVKSKCMSIAS) are cytoplasmic. The helical transmembrane segment at 470–490 (AANWIWGFLISFFTPFITGAI) threads the bilayer. Residue N491 is a topological domain, extracellular. Residues 492-512 (FYYGYVFMGCMVFAYFYVFFF) form a helical membrane-spanning segment. Residues 513–570 (VPETKGLSLEEVNDMYAEGVLPWKSASWVPVSKRGADYNADDLMHDDQPFYKSLFSRK) are Cytoplasmic-facing.

It belongs to the major facilitator superfamily. Sugar transporter (TC 2.A.1.1) family.

The protein localises to the membrane. Its function is as follows. Low-affinity glucose transporter. HXT1 is as well involved in the transport of mannose. This chain is Low-affinity glucose transporter HXT1 (HXT1), found in Saccharomyces cerevisiae (strain ATCC 204508 / S288c) (Baker's yeast).